The chain runs to 334 residues: Kihadalactone A synthase LFS (334 aa).

The region spanning 181–286 (KTASYSNMFH…RYSTGLFLCP (106 aa)) is the Fe2OG dioxygenase domain. Residues His-208, Asp-210, and His-269 each contribute to the Fe cation site. Arg-277 is a binding site for 2-oxoglutarate.

The protein belongs to the iron/ascorbate-dependent oxidoreductase family. Fe(2+) serves as cofactor. In terms of tissue distribution, expressed in maturing fruits and in juice vesicles.

The enzyme catalyses (1R,2R,3S,8R,10R,11R,15S,16S)-3-(acetyloxy)-15-(1-hydroxy-4-oxobutan-2-yl)-2,7,7,11,16-pentamethyl-5-oxo-6-oxatetracyclo[9.7.0.0(2,8).0(12,16)]octadec-12-en-10-yl acetate + 2-oxoglutarate + O2 = kihadalactone A + succinate + CO2 + 2 H2O. The protein operates within secondary metabolite biosynthesis; terpenoid biosynthesis. Functionally, 2-oxoglutarate-Fe(II) type oxidoreductase involved in the biosynthesis of limonoids triterpene natural products such as limonin, a compound with insecticidal activity responsible for the bitter taste in citrus. Catalyzes the formation of kihadalactone A. This is Kihadalactone A synthase LFS from Citrus sinensis (Sweet orange).